We begin with the raw amino-acid sequence, 328 residues long: MLKHISSHIAMGCPQDECSICWESMPSGVGRLMPCGHEYHLACIRKWFHLHSGNRSCPVCRTEASVLVDTDHEVKIDLSVGQLLDFYGLLDEIGSQLLAITLQDHSTQDDEVNEEGLAEQRAQLTLVQCGICGEMNGDIDTCCNRCHHMYHHSCLGQLLVEVNAEREQGWSHCIFCYEQLVPLYISGARRVLSLQDRGVHRGRVRNNRSILTELIYERSGVLVHGIEDQHASQHDINDIEHSWHLLEQNRQRKQLEYQDKCKIQAHVRRILDHYYHCAKVTKAQYTFINKKVSQTLYALSRGVYPAVDLDYDGIAKTLILDEMEKLSS.

The RING-type 1; atypical zinc-finger motif lies at 18–61 (CSICWESMPSGVGRLMPCGHEYHLACIRKWFHLHSGNRSCPVCR). An RING-type 2; atypical zinc finger spans residues 129 to 177 (CGICGEMNGDIDTCCNRCHHMYHHSCLGQLLVEVNAEREQGWSHCIFCY).

It localises to the cytoplasm. Its subcellular location is the nucleus. Its function is as follows. Required for tolerance to alcohol. The sequence is that of Alcohol-sensitive RING finger protein 1 (ASR1) from Eremothecium gossypii (strain ATCC 10895 / CBS 109.51 / FGSC 9923 / NRRL Y-1056) (Yeast).